We begin with the raw amino-acid sequence, 91 residues long: DNA-binding protein HU (91 aa).

Belongs to the bacterial histone-like protein family.

Functionally, histone-like DNA-binding protein which is capable of wrapping DNA to stabilize it, and thus to prevent its denaturation under extreme environmental conditions. Also seems to act as a fortuitous virulence factor in delayed sequelae by binding to heparan sulfate-proteoglycans in the extracellular matrix of target organs and acting as a nidus for in situ immune complex formation. This is DNA-binding protein HU (hup) from Streptococcus downei (Streptococcus sobrinus).